Reading from the N-terminus, the 393-residue chain is S-adenosylmethionine synthase (393 aa).

Histidine 17 contacts ATP. Aspartate 19 provides a ligand contact to Mg(2+). A K(+)-binding site is contributed by glutamate 45. L-methionine contacts are provided by glutamate 58 and glutamine 106. Residues 106–116 form a flexible loop region; that stretch reads QSAHIAQGVDA. ATP contacts are provided by residues 171–173, aspartate 246, 252–253, alanine 269, and lysine 273; these read DAK and RK. Aspartate 246 is an L-methionine binding site. Lysine 277 provides a ligand contact to L-methionine.

Belongs to the AdoMet synthase family. Homotetramer; dimer of dimers. Mg(2+) serves as cofactor. It depends on K(+) as a cofactor.

The protein resides in the cytoplasm. It catalyses the reaction L-methionine + ATP + H2O = S-adenosyl-L-methionine + phosphate + diphosphate. Its pathway is amino-acid biosynthesis; S-adenosyl-L-methionine biosynthesis; S-adenosyl-L-methionine from L-methionine: step 1/1. Catalyzes the formation of S-adenosylmethionine (AdoMet) from methionine and ATP. The overall synthetic reaction is composed of two sequential steps, AdoMet formation and the subsequent tripolyphosphate hydrolysis which occurs prior to release of AdoMet from the enzyme. This Roseobacter denitrificans (strain ATCC 33942 / OCh 114) (Erythrobacter sp. (strain OCh 114)) protein is S-adenosylmethionine synthase.